We begin with the raw amino-acid sequence, 642 residues long: Threonine--tRNA ligase (642 aa).

Residues 1–61 (MPVITLPDGS…ENDAQLAIIT (61 aa)) enclose the TGS domain. Residues 243-534 (DHRKIGKQLD…LTEEFAGFFP (292 aa)) are catalytic. At lysine 286 the chain carries N6-acetyllysine. Residues cysteine 334, histidine 385, and histidine 511 each contribute to the Zn(2+) site.

The protein belongs to the class-II aminoacyl-tRNA synthetase family. In terms of assembly, homodimer. The cofactor is Zn(2+).

Its subcellular location is the cytoplasm. The catalysed reaction is tRNA(Thr) + L-threonine + ATP = L-threonyl-tRNA(Thr) + AMP + diphosphate + H(+). Its function is as follows. Catalyzes the attachment of threonine to tRNA(Thr) in a two-step reaction: L-threonine is first activated by ATP to form Thr-AMP and then transferred to the acceptor end of tRNA(Thr). Also edits incorrectly charged L-seryl-tRNA(Thr). The polypeptide is Threonine--tRNA ligase (Escherichia fergusonii (strain ATCC 35469 / DSM 13698 / CCUG 18766 / IAM 14443 / JCM 21226 / LMG 7866 / NBRC 102419 / NCTC 12128 / CDC 0568-73)).